Here is a 271-residue protein sequence, read N- to C-terminus: Large ribosomal subunit protein uL15c (271 aa).

Disordered regions lie at residues 1–21 and 66–120; these read MASL…NNYP and SNVS…QKSR. The transit peptide at 1–61 directs the protein to the chloroplast; it reads MASLLSLSST…KESTRLVVVA (61 aa). Residues 66-76 are compositionally biased toward low complexity; it reads SNVSPSIGSGS. Basic residues predominate over residues 91–101; the sequence is SRKKGKRKGRG. Over residues 102 to 114 the composition is skewed to gly residues; it reads HAAGQGGSCGFGM.

As to quaternary structure, component of the chloroplast large ribosomal subunit (LSU). Mature 70S chloroplast ribosomes of higher plants consist of a small (30S) and a large (50S) subunit. The 30S small subunit contains 1 molecule of ribosomal RNA (16S rRNA) and 24 different proteins. The 50S large subunit contains 3 rRNA molecules (23S, 5S and 4.5S rRNA) and 33 different proteins.

It localises to the plastid. It is found in the chloroplast. Component of the chloroplast ribosome (chloro-ribosome), a dedicated translation machinery responsible for the synthesis of chloroplast genome-encoded proteins, including proteins of the transcription and translation machinery and components of the photosynthetic apparatus. In Spinacia oleracea (Spinach), this protein is Large ribosomal subunit protein uL15c (RPL15).